Consider the following 234-residue polypeptide: Glycerol uptake facilitator protein (234 aa).

Transmembrane regions (helical) follow at residues 9-29 (FLGTLILILLGNGVVAGVVLP), 37-57 (GWIVITMGWGIAVAVAVFVSG), 61-81 (PAHLNPAVTIGVALKGGLPWA), 83-103 (VLPYILAQFAGAMLGQILVWL), 135-155 (LISEILGTFVLVLTIFALGLY), and 159-179 (AGIGTFAVGTLIVGIGLSLGG). The NPA 1 motif lies at 65–67 (NPA). The short motif at 186-188 (NPA) is the NPA 2 element. Residues 214–234 (WIPVVGPVIGAALAVLVFSLF) form a helical membrane-spanning segment.

This sequence belongs to the MIP/aquaporin (TC 1.A.8) family.

Its subcellular location is the cell membrane. It catalyses the reaction glycerol(in) = glycerol(out). In terms of biological role, mediates glycerol diffusion across the cytoplasmic membrane via a pore-type mechanism. The protein is Glycerol uptake facilitator protein (glpF) of Streptococcus pneumoniae (strain ATCC BAA-255 / R6).